We begin with the raw amino-acid sequence, 61 residues long: Small ribosomal subunit protein uS14B (61 aa).

The Zn(2+) site is built by Cys-24, Cys-27, Cys-40, and Cys-43.

Belongs to the universal ribosomal protein uS14 family. Zinc-binding uS14 subfamily. As to quaternary structure, part of the 30S ribosomal subunit. Contacts proteins S3 and S10. It depends on Zn(2+) as a cofactor.

Binds 16S rRNA, required for the assembly of 30S particles and may also be responsible for determining the conformation of the 16S rRNA at the A site. This is Small ribosomal subunit protein uS14B from Myxococcus xanthus (strain DK1622).